The following is a 319-amino-acid chain: RNA polymerase II holoenzyme cyclin-like subunit (319 aa).

One can recognise a Cyclin N-terminal domain in the interval 53 to 142 (QQLIRLAKRL…LGECEFFMIS (90 aa)). Low complexity predominate over residues 237–251 (QGQQAQGGMPEPAAA). Residues 237 to 261 (QGQQAQGGMPEPAAAEPKEKRQQDR) form a disordered region. Residues 252 to 261 (EPKEKRQQDR) show a composition bias toward basic and acidic residues.

Belongs to the cyclin family. Cyclin C subfamily. As to quaternary structure, component of the SRB8-11 complex, a regulatory module of the Mediator complex. Interacts with SSN3/FCK1.

The protein localises to the nucleus. In terms of biological role, component of the SRB8-11 complex. The SRB8-11 complex is a regulatory module of the Mediator complex which is itself involved in regulation of basal and activated RNA polymerase II-dependent transcription. The SRB8-11 complex may be involved in the transcriptional repression of a subset of genes regulated by Mediator. It may inhibit the association of the Mediator complex with RNA polymerase II to form the holoenzyme complex. The SRB8-11 complex phosphorylates the C-terminal domain (CTD) of the largest subunit of RNA polymerase II. May play a role in signal transduction pathways regulating secondary metabolism and fungal development (conidiation). In Gibberella moniliformis (Maize ear and stalk rot fungus), this protein is RNA polymerase II holoenzyme cyclin-like subunit (SSN8).